The chain runs to 403 residues: Poly(rC)-binding protein 4 (403 aa).

KH domains are found at residues 17 to 67 (TLTL…TITG), 101 to 154 (PVTL…TVSG), and 241 to 293 (TSSQ…TITG).

Widely expressed, with highest levels in testis and lowest in heart.

It is found in the cytoplasm. Functionally, single-stranded nucleic acid binding protein that binds preferentially to oligo dC. The sequence is that of Poly(rC)-binding protein 4 (Pcbp4) from Mus musculus (Mouse).